We begin with the raw amino-acid sequence, 152 residues long: Transcriptional repressor NrdR (152 aa).

The segment at 3 to 34 (CPFCSTEETKVIDSRLVSEGYQVRRRRECTNC) is a zinc-finger region. One can recognise an ATP-cone domain in the interval 49 to 139 (PKIVKTDGYR…VYLSFENINE (91 aa)).

It belongs to the NrdR family. Requires Zn(2+) as cofactor.

Negatively regulates transcription of bacterial ribonucleotide reductase nrd genes and operons by binding to NrdR-boxes. This is Transcriptional repressor NrdR from Actinobacillus succinogenes (strain ATCC 55618 / DSM 22257 / CCUG 43843 / 130Z).